The chain runs to 438 residues: tRNA wybutosine-synthesizing protein 2 homolog (438 aa).

Residues Ser209, Lys216, Glu256, and 284–285 (DN) contribute to the S-adenosyl-L-methionine site.

It belongs to the class I-like SAM-binding methyltransferase superfamily. TRM5/TYW2 family.

It catalyses the reaction 4-demethylwyosine(37) in tRNA(Phe) + S-adenosyl-L-methionine = 4-demethyl-7-[(3S)-3-amino-3-carboxypropyl]wyosine(37) in tRNA(Phe) + S-methyl-5'-thioadenosine + H(+). Its pathway is tRNA modification; wybutosine-tRNA(Phe) biosynthesis. S-adenosyl-L-methionine-dependent transferase that acts as a component of the wybutosine biosynthesis pathway. Wybutosine is a hyper modified guanosine with a tricyclic base found at the 3'-position adjacent to the anticodon of eukaryotic phenylalanine tRNA. Catalyzes the transfer of the alpha-amino-alpha-carboxypropyl (acp) group from S-adenosyl-L-methionine to the C-7 position of 4-demethylwyosine (imG-14) to produce wybutosine-86. In Bos taurus (Bovine), this protein is tRNA wybutosine-synthesizing protein 2 homolog (TRMT12).